The primary structure comprises 572 residues: ATP-dependent lipid A-core flippase (572 aa).

5 helical membrane-spanning segments follow: residues 14–34 (IIPY…VAAL), 55–75 (VFFL…KGVL), 148–168 (IFLL…CFLI), 249–269 (MEII…SEVI), and 272–292 (SATP…YDPV). The 283-residue stretch at 22–304 (FIAMFAMIVV…VSQVNSTIQQ (283 aa)) folds into the ABC transmembrane type-1 domain. The ABC transporter domain occupies 338 to 571 (IEFHDVSFSY…EGEYQLLYNM (234 aa)). 370 to 377 (GPSGGGKT) is an ATP binding site.

It belongs to the ABC transporter superfamily. Lipid exporter (TC 3.A.1.106) family. As to quaternary structure, homodimer.

The protein resides in the cell inner membrane. It carries out the reaction ATP + H2O + lipid A-core oligosaccharideSide 1 = ADP + phosphate + lipid A-core oligosaccharideSide 2.. Its function is as follows. Involved in lipopolysaccharide (LPS) biosynthesis. Translocates lipid A-core from the inner to the outer leaflet of the inner membrane. Transmembrane domains (TMD) form a pore in the inner membrane and the ATP-binding domain (NBD) is responsible for energy generation. The sequence is that of ATP-dependent lipid A-core flippase from Desulfotalea psychrophila (strain LSv54 / DSM 12343).